Reading from the N-terminus, the 666-residue chain is Pantothenate kinase 1 (666 aa).

It belongs to the type II pantothenate kinase family.

The enzyme catalyses (R)-pantothenate + ATP = (R)-4'-phosphopantothenate + ADP + H(+). The protein operates within cofactor biosynthesis; coenzyme A biosynthesis; CoA from (R)-pantothenate: step 1/5. Regulated by feedback inhibition by malonyl-CoA. Its function is as follows. Catalyzes the phosphorylation of pantothenate the first step in CoA biosynthesis. May play a role in the physiological regulation of the intracellular CoA concentration. This is Pantothenate kinase 1 from Oryza sativa subsp. japonica (Rice).